The chain runs to 379 residues: tRNA-specific 2-thiouridylase MnmA (379 aa).

ATP contacts are provided by residues 9 to 16 (GLSGGVDS) and Met35. The interval 95-97 (NPD) is interaction with target base in tRNA. Cys100 (nucleophile) is an active-site residue. An intrachain disulfide couples Cys100 to Cys198. ATP is bound at residue Gly124. Positions 148–150 (KDQ) are interaction with tRNA. Cys198 acts as the Cysteine persulfide intermediate in catalysis. The segment at 325–326 (RY) is interaction with tRNA.

This sequence belongs to the MnmA/TRMU family.

Its subcellular location is the cytoplasm. The enzyme catalyses S-sulfanyl-L-cysteinyl-[protein] + uridine(34) in tRNA + AH2 + ATP = 2-thiouridine(34) in tRNA + L-cysteinyl-[protein] + A + AMP + diphosphate + H(+). Its function is as follows. Catalyzes the 2-thiolation of uridine at the wobble position (U34) of tRNA, leading to the formation of s(2)U34. This chain is tRNA-specific 2-thiouridylase MnmA, found in Acidovorax sp. (strain JS42).